A 282-amino-acid chain; its full sequence is HTH-type transcriptional activator RhaR (282 aa).

Residues 179 to 277 (DKLITRLAAS…GMTPSQWRHL (99 aa)) enclose the HTH araC/xylS-type domain. DNA-binding regions (H-T-H motif) lie at residues 196–217 (DKFC…RQQT) and 244–267 (ISDI…TRET).

As to quaternary structure, binds DNA as a dimer.

Its subcellular location is the cytoplasm. Its function is as follows. Activates expression of the rhaSR operon in response to L-rhamnose. This chain is HTH-type transcriptional activator RhaR, found in Escherichia coli O1:K1 / APEC.